The chain runs to 391 residues: Odorant receptor 67d (391 aa).

At 1–45 (MLKMAKVEPVERYCKVIRMIRFCVGFCGNDVADPNFRMWWLTYAV) the chain is on the cytoplasmic side. A helical membrane pass occupies residues 46 to 66 (MAAIAFFFACTGYTIYVGVVI). The Extracellular portion of the chain corresponds to 67 to 71 (NGDLT). A helical membrane pass occupies residues 72-92 (IILQALAMVGSAVQGLTKLLV). Topologically, residues 93–140 (TANNASHMREVQNTYEDIYREYGSKGDEYAKCLEKRIRITWTLLIGFM) are cytoplasmic. A helical transmembrane segment spans residues 141–161 (LVYIILLGLVITFPIFYLLIL). The Extracellular portion of the chain corresponds to 162-164 (HQK). Residues 165-185 (VLVMQFLIPFLDHTTDGGHLI) form a helical membrane-spanning segment. The Cytoplasmic portion of the chain corresponds to 186–191 (LTAAHV). The chain crosses the membrane as a helical span at residues 192 to 212 (ILITFGGFGNYGGDMYLFLFV). At 213-268 (THVPLIKDIFCVKLTEFNELVMKRNDFPKVRAMLCDLLVWHQLYTRMLQTTKKIYS) the chain is on the extracellular side. A helical membrane pass occupies residues 269 to 289 (IVLFVQLSTTCVGLLCTISCI). Over 290-297 (FMKAWPAA) the chain is Cytoplasmic. The chain crosses the membrane as a helical span at residues 298 to 318 (PLYLLYAAITLYTFCGLGTLV). The Extracellular segment spans residues 319–391 (ENSNEDFLSV…FSMMLMNYLG (73 aa)).

It belongs to the insect chemoreceptor superfamily. Heteromeric odorant receptor channel (TC 1.A.69) family. Or67d subfamily. In terms of assembly, interacts with Orco. Complexes exist early in the endomembrane system in olfactory sensory neurons (OSNs), coupling these complexes to the conserved ciliary trafficking pathway. In terms of tissue distribution, expressed in antenna.

The protein resides in the cell membrane. Functionally, plays a role in detection and sensitivity to pheromones and signal transduction of the fatty-acid-derived male pheromone 11-cis vaccenyl acetate (cVA). Acts in concert with Snmp and lush to capture cVA molecules on the surface of Or67d expressing olfactory dendrites and facilitate their transfer to the odorant-receptor Orco complex. Necessary to mediate behavioral responses to cVA by regulating both male and female mating behavior. Activation of Or67d neurons by cVA inhibits courtship of other males, whereas in females their activation promotes receptivity to other males. May form a complex with Orco to form odorant-sensing units, providing sensitive and prolonged odorant signaling and calcium permeability. This chain is Odorant receptor 67d (Or67d), found in Drosophila melanogaster (Fruit fly).